We begin with the raw amino-acid sequence, 198 residues long: MORN repeat-containing protein 4 homolog (198 aa).

Alanine 2 is modified (N-acetylalanine). The segment covering 23–45 (QHQQHPHQQGQHGHHQQGQGQSQ) has biased composition (low complexity). A disordered region spans residues 23–46 (QHQQHPHQQGQHGHHQQGQGQSQY). 4 MORN repeats span residues 64–87 (YIGEWNQRGQKHGIGHLQFADGTR), 88–109 (YDGQFQEGLSQGVGCLWFADGA), 111–132 (YEGEFHQGWFHGNGIFWRADGM), and 134–153 (YEGEFRGGKIWGLGLLTFQD).

As to quaternary structure, interacts with ninaC. In terms of processing, phosphorylated under dark conditions and is dephosphorylated by light exposure. In terms of tissue distribution, retina. Expressed primarily in the phototransducing compartment of photoreceptor cells, the rhabdomeres and its expression is dependent on ninaC protein (at protein level).

It localises to the membrane. Its subcellular location is the cell projection. The protein resides in the rhabdomere membrane. Plays a role in promoting axonal degeneration following neuronal injury by toxic insult or trauma. Organizes rhabdomeric components to suppress random activation of the phototransduction cascade and thus increases the signaling fidelity of dark-adapted photoreceptors. The rtp/ninaC complex is required for stability of inad and inac and the normal termination of phototransduction in the retina. The chain is MORN repeat-containing protein 4 homolog from Drosophila melanogaster (Fruit fly).